Consider the following 747-residue polypeptide: DNA repair and recombination protein RAD54-like (747 aa).

Residues 1 to 41 form a disordered region; sequence MRRSLAPSQLAKRKPEGRSCDDEDWQPGLVTPRKRKSSSET. The interval 2 to 9 is required for chromatin remodeling, strand pairing activities and coupling of ATPase activity; that stretch reads RRSLAPSQ. Residue Ser-38 is modified to Phosphoserine. Residues 170 to 345 enclose the Helicase ATP-binding domain; sequence SRRIPGSHGC…FSLVHFVNSG (176 aa). Position 183-190 (183-190) interacts with ATP; the sequence is DEMGLGKT. The short motif at 296–299 is the DEGH box element; sequence DEGH. A Helicase C-terminal domain is found at 500-653; sequence VLDYILAVTR…CVVDEEQDVE (154 aa). Lys-515 carries the post-translational modification N6-acetyllysine. Ser-572 bears the Phosphoserine; by NEK1 mark.

It belongs to the SNF2/RAD54 helicase family. As to quaternary structure, homohexamer. Interacts (via N-terminus) with RAD51. Interacts with NAP1L1. Interacts with BRD9; this interaction orchestrates RAD51-RAD54 complex formation. In terms of processing, acetylated. Acetylation promotes interaction with BRD9, and subsequently with RAD54, which is essential for homologous recombination (HR). Post-translationally, phosphorylated. Phosphorylation at Ser-572 by NEK1 specifically in G2 phase allows efficient removal of RAD51 filaments from DNA.

It localises to the nucleus. It catalyses the reaction ATP + H2O = ADP + phosphate + H(+). Functionally, plays an essential role in homologous recombination (HR) which is a major pathway for repairing DNA double-strand breaks (DSBs), single-stranded DNA (ssDNA) gaps, and stalled or collapsed replication forks. Acts as a molecular motor during the homology search and guides RAD51 ssDNA along a donor dsDNA thereby changing the homology search from the diffusion-based mechanism to a motor-guided mechanism. Also plays an essential role in RAD51-mediated synaptic complex formation which consists of three strands encased in a protein filament formed once homology is recognized. Once DNA strand exchange occured, dissociates RAD51 from nucleoprotein filaments formed on dsDNA. The sequence is that of DNA repair and recombination protein RAD54-like (RAD54L) from Homo sapiens (Human).